We begin with the raw amino-acid sequence, 429 residues long: MMNPRRLPPLPSSTSSASAADDMDPRVWRRLPQPLVDRVLACLPTPSFLRLRAACRRFYHLLFSSPFLHSHLLLSPHLPFFAFVVPAAGHLLLLDPTATASWSRLPLPLPPVAGGPAAFSPAAASAGLLAFLSDASGHKTLLLANPITRLLAALPISPTPRLSPTVGLAAGPTSIIAVVAGDDLVSPFAVKNISADTFVADAASVPPSGFWAPSSLLPRLSSLDPGAGMAFASGRFYCMSSSPFAVLVFDVAENVWSKVQPPMRRFLRSPALVELGGGREGAARVALVSAVEKSRLSVPRSVRLWTLRGGGGGGGGGAWTEVARMPPEVHAQFAAAEGGRGFECAAHGDYVVLAPRGPVAQAPTSALVFDSRRDEWRWAPPCPYVVVAHHGGAGAAGFRVFAYEPRLATPAIGLLDATAPVALHGMHDG.

The segment covering 1–11 (MMNPRRLPPLP) has biased composition (pro residues). Residues 1–21 (MMNPRRLPPLPSSTSSASAAD) form a disordered region. One can recognise an F-box domain in the interval 25–71 (PRVWRRLPQPLVDRVLACLPTPSFLRLRAACRRFYHLLFSSPFLHSH). 2 helical membrane passes run 72-92 (LLLSPHLPFFAFVVPAAGHLL) and 112-132 (VAGGPAAFSPAAASAGLLAFL). Kelch repeat units lie at residues 229–277 (MAFA…ELGG), 284–339 (RVAL…AEGG), and 350–397 (YVVL…GAAG).

As to quaternary structure, part of a putative SCF (ASK/Cullin/F-box) ubiquitin ligase complex. Interacts with FL/APO2. As to expression, expressed in seedlings, roots, leaves, shoot apical meristem (SAM), developing panicles, and, at lower levels, in developing seeds.

The protein resides in the membrane. The protein operates within protein modification; protein ubiquitination. In terms of biological role, component of SCF(ASK-cullin-F-box) E3 ubiquitin ligase complexes, which may mediate the ubiquitination and subsequent proteasomal degradation of target proteins. Together with FL/APO2, involved in the temporal regulation of meristem identity during both vegetative and reproductive developments in an APO2-dependent manner. Promotes spikelet formation by suppressing the precocious conversion of inflorescence meristems to spikelet meristems, probably via a positive regulation of class-C floral homeotic genes, but not of class-B genes, and through the control of cell proliferation in meristems. Mediates culm development and strength/diameter enhancement at internodes. Required for the regulation of the plastochron, floral organ identity, and floral determinacy. Controls the number of primary rachis branches (PRBs). May trigger the formation of vascular bundle systems which, consequently, promote carbohydrate translocation to panicles. Involved in ozone-induced grain yield regulation. The protein is Protein ABERRANT PANICLE ORGANIZATION 1 of Oryza sativa subsp. indica (Rice).